A 202-amino-acid chain; its full sequence is HTH-type transcriptional regulator BetI 1 (202 aa).

Residues 8-68 (PIRRRQLIQA…SAMRQILWDL (61 aa)) enclose the HTH tetR-type domain. A DNA-binding region (H-T-H motif) is located at residues 31-50 (TIARIAKRAGVSAGIISHYF).

Its pathway is amine and polyamine biosynthesis; betaine biosynthesis via choline pathway [regulation]. Functionally, repressor involved in the biosynthesis of the osmoprotectant glycine betaine. It represses transcription of the choline transporter BetT and the genes of BetAB involved in the synthesis of glycine betaine. The sequence is that of HTH-type transcriptional regulator BetI 1 from Chromohalobacter salexigens (strain ATCC BAA-138 / DSM 3043 / CIP 106854 / NCIMB 13768 / 1H11).